A 147-amino-acid chain; its full sequence is Hemoglobin subunit gamma (147 aa).

One can recognise a Globin domain in the interval 3–147 (HFTAEEKAVI…VAIALAHKYH (145 aa)). Residues His64 and His93 each contribute to the heme b site.

The protein belongs to the globin family. Heterotetramer of two alpha chains and two gamma chains in fetal hemoglobin (Hb F). Red blood cells.

Its function is as follows. Gamma chains make up the fetal hemoglobin F, in combination with alpha chains. This Eulemur fulvus fulvus (Brown lemur) protein is Hemoglobin subunit gamma (HBG).